Consider the following 873-residue polypeptide: Alanine--tRNA ligase (873 aa).

His563, His567, Cys664, and His668 together coordinate Zn(2+).

Belongs to the class-II aminoacyl-tRNA synthetase family. The cofactor is Zn(2+).

It localises to the cytoplasm. It catalyses the reaction tRNA(Ala) + L-alanine + ATP = L-alanyl-tRNA(Ala) + AMP + diphosphate. Its function is as follows. Catalyzes the attachment of alanine to tRNA(Ala) in a two-step reaction: alanine is first activated by ATP to form Ala-AMP and then transferred to the acceptor end of tRNA(Ala). Also edits incorrectly charged Ser-tRNA(Ala) and Gly-tRNA(Ala) via its editing domain. In Aromatoleum aromaticum (strain DSM 19018 / LMG 30748 / EbN1) (Azoarcus sp. (strain EbN1)), this protein is Alanine--tRNA ligase.